Consider the following 251-residue polypeptide: Fibroblast growth factor 23 (251 aa).

An N-terminal signal peptide occupies residues 1 to 24; the sequence is MLGACLRLLVGALCTVCSLGTARA. Cysteines 95 and 113 form a disulfide. Thr-171 and Thr-178 each carry an O-linked (GalNAc) threonine glycan. The disordered stretch occupies residues 175 to 251; the sequence is RRHTRSAEDP…DRCRPFPRFV (77 aa). Basic and acidic residues predominate over residues 179 to 189; sequence RSAEDPPERDP. Phosphoserine; by FAM20C is present on Ser-180.

The protein belongs to the heparin-binding growth factors family. As to quaternary structure, interacts with FGFR1, FGFR2, FGFR3 and FGFR4. Affinity between fibroblast growth factors (FGFs) and their receptors is increased by KL and heparan sulfate glycosaminoglycans that function as coreceptors. In terms of processing, following secretion this protein is inactivated by cleavage into a N-terminal fragment and a C-terminal fragment. The processing is effected by proprotein convertases. Post-translationally, O-glycosylated at Thr-171 and Thr-178 by GALNT3 and glycosylation of Thr-178 requires previous glycosylation at Thr171. Glycosylation is necessary for secretion; it blocks processing by proprotein convertases when the O-glycan is alpha 2,6-sialylated. Competition between proprotein convertase cleavage and block of cleavage by O-glycosylation determines the level of secreted active FGF23. Phosphorylation at Ser-180 mediated by FAM20C slows down glycosylation at Thr-178 notably. As to expression, expressed in the parathyroid.

Its subcellular location is the secreted. Functionally, regulator of phosphate homeostasis. Inhibits renal tubular phosphate transport by reducing SLC34A1 levels. Regulator of vitamin-D metabolism. Negatively regulates osteoblasts differentiation and matrix mineralization. Acts directly on the parathyroid to decrease PTH secretion. Up-regulates EGR1 expression in the presence of KL. This chain is Fibroblast growth factor 23 (Fgf23), found in Rattus norvegicus (Rat).